A 280-amino-acid polypeptide reads, in one-letter code: Transcription factor HES-1 (280 aa).

Residues Met1–Lys44 are disordered. Residues Ser10–Val21 show a composition bias toward low complexity. Basic and acidic residues predominate over residues Asp26 to Arg35. One can recognise a bHLH domain in the interval His34–Leu91. In terms of domain architecture, Orange spans Tyr110–Leu143. Disordered regions lie at residues Gly157–Gly200 and Thr254–Asn280. Composition is skewed to pro residues over residues Gln164 to Gly174 and Phe181 to Gly200. A compositionally biased stretch (polar residues) spans Thr254 to Ala271. The WRPW motif signature appears at Trp275–Trp278.

In terms of assembly, transcription repression requires formation of a complex with a corepressor protein of the Groucho/TLE family. Interacts (via WPRW motif) with TLE1, and more weakly with TLE2. Interacts with HES6. Interacts with SIRT1. Interacts with an FA complex, composed of FANCA, FANCF, FANCG and FANCL, but not of FANCC, nor FANCE. In terms of processing, (Microbial infection) Ubiquitinated via human cytomegalovirus/HCMV protein IE1 that assembles a HES1 ubiquitination complex; leading to HES1 proteasomal degradation.

It localises to the nucleus. Its function is as follows. Transcriptional repressor of genes that require a bHLH protein for their transcription. May act as a negative regulator of myogenesis by inhibiting the functions of MYOD1 and ASH1. Binds DNA on N-box motifs: 5'-CACNAG-3' with high affinity and on E-box motifs: 5'-CANNTG-3' with low affinity. May play a role in a functional FA core complex response to DNA cross-link damage, being required for the stability and nuclear localization of FA core complex proteins, as well as for FANCD2 monoubiquitination in response to DNA damage. This chain is Transcription factor HES-1 (HES1), found in Homo sapiens (Human).